We begin with the raw amino-acid sequence, 128 residues long: Small ribosomal subunit protein uS12 (128 aa).

Residues 1 to 24 are disordered; it reads MPTFNQLVKYGREKRKKKSKAPAL. The residue at position 89 (Asp-89) is a 3-methylthioaspartic acid. The disordered stretch occupies residues 105-128; that stretch reads AGVEGRRQSRSKYGTKRPKEEKGG.

This sequence belongs to the universal ribosomal protein uS12 family. As to quaternary structure, part of the 30S ribosomal subunit. Contacts proteins S8 and S17. May interact with IF1 in the 30S initiation complex.

In terms of biological role, with S4 and S5 plays an important role in translational accuracy. Its function is as follows. Interacts with and stabilizes bases of the 16S rRNA that are involved in tRNA selection in the A site and with the mRNA backbone. Located at the interface of the 30S and 50S subunits, it traverses the body of the 30S subunit contacting proteins on the other side and probably holding the rRNA structure together. The combined cluster of proteins S8, S12 and S17 appears to hold together the shoulder and platform of the 30S subunit. The sequence is that of Small ribosomal subunit protein uS12 from Aquifex aeolicus (strain VF5).